Consider the following 259-residue polypeptide: Ribosomal RNA small subunit methyltransferase A (259 aa).

Positions 12, 14, 39, 60, 84, and 102 each coordinate S-adenosyl-L-methionine.

The protein belongs to the class I-like SAM-binding methyltransferase superfamily. rRNA adenine N(6)-methyltransferase family. RsmA subfamily.

The protein localises to the cytoplasm. It carries out the reaction adenosine(1518)/adenosine(1519) in 16S rRNA + 4 S-adenosyl-L-methionine = N(6)-dimethyladenosine(1518)/N(6)-dimethyladenosine(1519) in 16S rRNA + 4 S-adenosyl-L-homocysteine + 4 H(+). In terms of biological role, specifically dimethylates two adjacent adenosines (A1518 and A1519) in the loop of a conserved hairpin near the 3'-end of 16S rRNA in the 30S particle. May play a critical role in biogenesis of 30S subunits. The sequence is that of Ribosomal RNA small subunit methyltransferase A from Nitrosospira multiformis (strain ATCC 25196 / NCIMB 11849 / C 71).